The following is a 116-amino-acid chain: Hydrogenase maturation factor HypA (116 aa).

Position 2 (H2) interacts with Ni(2+). Zn(2+) contacts are provided by C73, C76, C90, and C93.

The protein belongs to the HypA/HybF family.

Its function is as follows. Involved in the maturation of [NiFe] hydrogenases. Required for nickel insertion into the metal center of the hydrogenase. The chain is Hydrogenase maturation factor HypA from Escherichia coli O157:H7.